The primary structure comprises 121 residues: UPF0231 protein ESA_03214 (121 aa).

This sequence belongs to the UPF0231 family.

The chain is UPF0231 protein ESA_03214 from Cronobacter sakazakii (strain ATCC BAA-894) (Enterobacter sakazakii).